The following is a 97-amino-acid chain: Large ribosomal subunit protein bL27 (97 aa).

The disordered stretch occupies residues Met-1–Arg-21.

It belongs to the bacterial ribosomal protein bL27 family.

The polypeptide is Large ribosomal subunit protein bL27 (Gemmatimonas aurantiaca (strain DSM 14586 / JCM 11422 / NBRC 100505 / T-27)).